Here is a 396-residue protein sequence, read N- to C-terminus: Imidazolonepropionase (396 aa).

Fe(3+) contacts are provided by histidine 70 and histidine 72. Positions 70 and 72 each coordinate Zn(2+). The 4-imidazolone-5-propanoate site is built by arginine 79, tyrosine 137, and histidine 164. Position 137 (tyrosine 137) interacts with N-formimidoyl-L-glutamate. Histidine 227 is a binding site for Fe(3+). Position 227 (histidine 227) interacts with Zn(2+). Position 230 (glutamine 230) interacts with 4-imidazolone-5-propanoate. Aspartate 301 is a Fe(3+) binding site. Aspartate 301 contacts Zn(2+). N-formimidoyl-L-glutamate-binding residues include asparagine 303 and glycine 305. 4-imidazolone-5-propanoate is bound at residue serine 306.

Belongs to the metallo-dependent hydrolases superfamily. HutI family. It depends on Zn(2+) as a cofactor. Requires Fe(3+) as cofactor.

The protein resides in the cytoplasm. The enzyme catalyses 4-imidazolone-5-propanoate + H2O = N-formimidoyl-L-glutamate. It participates in amino-acid degradation; L-histidine degradation into L-glutamate; N-formimidoyl-L-glutamate from L-histidine: step 3/3. Catalyzes the hydrolytic cleavage of the carbon-nitrogen bond in imidazolone-5-propanoate to yield N-formimidoyl-L-glutamate. It is the third step in the universal histidine degradation pathway. This is Imidazolonepropionase from Mycolicibacterium smegmatis (strain ATCC 700084 / mc(2)155) (Mycobacterium smegmatis).